Consider the following 207-residue polypeptide: MEITEIKLKKRDKIGKQYAKKYRRSNLIPGVVYGAHLKENIHVLVEKKDLWNLIKKGHSKEQHILRLIIEDGENTITENAILQDIQIDPIKDDLLHVDFHAVSLEEVVDVYVPVVLVGESKGVKQGGILQHGVEEILIRALPLDVPPHIEVDITDLEIGDSITVGDLNLPENIKVLTPADEVIVNIIPPKGYTEEASTEESQTESQS.

This sequence belongs to the bacterial ribosomal protein bL25 family. CTC subfamily. Part of the 50S ribosomal subunit; part of the 5S rRNA/L5/L18/L25 subcomplex. Contacts the 5S rRNA. Binds to the 5S rRNA independently of L5 and L18.

This is one of the proteins that binds to the 5S RNA in the ribosome where it forms part of the central protuberance. This chain is Large ribosomal subunit protein bL25, found in Dictyoglomus thermophilum (strain ATCC 35947 / DSM 3960 / H-6-12).